A 315-amino-acid polypeptide reads, in one-letter code: Aspartate carbamoyltransferase catalytic subunit (315 aa).

2 residues coordinate carbamoyl phosphate: R64 and T65. K92 contacts L-aspartate. Positions 114, 142, and 145 each coordinate carbamoyl phosphate. Positions 175 and 229 each coordinate L-aspartate. G270 and P271 together coordinate carbamoyl phosphate.

This sequence belongs to the aspartate/ornithine carbamoyltransferase superfamily. ATCase family. In terms of assembly, heterododecamer (2C3:3R2) of six catalytic PyrB chains organized as two trimers (C3), and six regulatory PyrI chains organized as three dimers (R2).

It carries out the reaction carbamoyl phosphate + L-aspartate = N-carbamoyl-L-aspartate + phosphate + H(+). It participates in pyrimidine metabolism; UMP biosynthesis via de novo pathway; (S)-dihydroorotate from bicarbonate: step 2/3. Catalyzes the condensation of carbamoyl phosphate and aspartate to form carbamoyl aspartate and inorganic phosphate, the committed step in the de novo pyrimidine nucleotide biosynthesis pathway. This is Aspartate carbamoyltransferase catalytic subunit from Bradyrhizobium diazoefficiens (strain JCM 10833 / BCRC 13528 / IAM 13628 / NBRC 14792 / USDA 110).